The chain runs to 66 residues: Conotoxin PnMLCL-01 (66 aa).

The signal sequence occupies residues 1–19; that stretch reads MLCLPVFIILLLLASPAAS. A propeptide spanning residues 20–45 is cleaved from the precursor; sequence NPLEKRIQSDLIRAALEDADTKNDPR. Cysteine 63 carries the post-translational modification Cysteine amide.

Belongs to the conotoxin T superfamily. Post-translationally, contains 2 disulfide bonds that can be either 'C1-C3, C2-C4' or 'C1-C4, C2-C3', since these disulfide connectivities have been observed for conotoxins with cysteine framework V (for examples, see AC P0DQQ7 and AC P81755). Expressed by the venom duct.

Its subcellular location is the secreted. In Conus pennaceus (Feathered cone), this protein is Conotoxin PnMLCL-01.